The primary structure comprises 567 residues: Proton-coupled zinc antiporter SLC30A9, mitochondrial (567 aa).

The next 5 membrane-spanning stretches (helical) occupy residues 238–258 (VVMV…LAWI), 313–333 (GVGI…MGLL), 341–361 (LLWA…TLLV), 391–411 (VILL…TCMG), and 423–443 (SLGS…LIYT). The LXXLL motif motif lies at 461–465 (LTELL).

This sequence belongs to the cation diffusion facilitator (CDF) transporter (TC 2.A.4) family. SLC30A subfamily. As to quaternary structure, interacts with GRIP1, ESR1, AR and CTNNB1.

It localises to the mitochondrion membrane. The protein localises to the nucleus. It is found in the endoplasmic reticulum. The enzyme catalyses Zn(2+)(in) + 2 H(+)(out) = Zn(2+)(out) + 2 H(+)(in). Its function is as follows. Acts as a zinc transporter involved in intracellular zinc homeostasis. Functions as a secondary coactivator for nuclear receptors by cooperating with p160 coactivators subtypes. Plays a role in transcriptional activation of Wnt-responsive genes. Functionally, mitochondrial proton-coupled zinc ion antiporter mediating the export of zinc from the mitochondria and involved in zinc homeostasis, zinc mobilization as well as mitochondrial morphology and health. In nucleus, functions as a secondary coactivator for nuclear receptors by cooperating with p160 coactivators subtypes. Plays a role in transcriptional activation of Wnt-responsive genes. The chain is Proton-coupled zinc antiporter SLC30A9, mitochondrial (Slc30a9) from Mus musculus (Mouse).